A 688-amino-acid polypeptide reads, in one-letter code: PTS system glucoside-specific EIICBA component (688 aa).

In terms of domain architecture, PTS EIIC type-1 spans 3–427 (KKLFGQLQRI…FKLKTPGRED (425 aa)). 10 consecutive transmembrane segments (helical) span residues 12 to 32 (IGKA…LLAF), 81 to 101 (LGLA…YLIM), 137 to 157 (LVLG…MGAL), 182 to 202 (FVPI…SFAW), 223 to 243 (LTTF…LHHI), 284 to 304 (AFTT…AFAI), 315 to 335 (VVGG…ITEP), 340 to 360 (FLFV…TSFL), 364 to 384 (LLGV…ILYG), and 395 to 415 (LVIP…DFAI). The 82-residue stretch at 438–519 (AKLPFDVLDA…AKIMSGEITK (82 aa)) folds into the PTS EIIB type-1 domain. The Phosphocysteine intermediate; for EIIB activity role is filled by Cys-460. The PTS EIIA type-1 domain occupies 560–664 (DQVFAGKMMG…SIVTPMIITN (105 aa)). His-612 serves as the catalytic Tele-phosphohistidine intermediate; for EIIA activity.

It localises to the cell membrane. In terms of biological role, the phosphoenolpyruvate-dependent sugar phosphotransferase system (sugar PTS), a major carbohydrate active -transport system, catalyzes the phosphorylation of incoming sugar substrates concomitantly with their translocation across the cell membrane. This system is involved in alpha- and beta-glucoside transport. This Staphylococcus aureus (strain bovine RF122 / ET3-1) protein is PTS system glucoside-specific EIICBA component (glcB).